Consider the following 27-residue polypeptide: Delta-conotoxin SuVIA (27 aa).

3 cysteine pairs are disulfide-bonded: C1-C17, C8-C21, and C16-C25.

This sequence belongs to the conotoxin O1 superfamily. Expressed by the venom duct, in the proximal part (indicative of a defensive role).

The protein localises to the secreted. In terms of biological role, this toxin activates voltage-gated sodium channels (Nav1.3/SCN3A (EC(50)=3.98 nM), Nav1.4/SCN4A (EC(50)=4.99 nM), Nav1.6/SCN8A (EC(50)=1.27 nM) and Nav1.7/SCN9A (EC(50)=2.42 nM)). It shifts the voltage-dependence of activation to more hyperpolarized potentials but has only little effect on channel inactivation. In vivo, it induces nocifensive or pain-like behaviors in mice when injected intraplantarly. This is coherent with the specific defensive role deduced from its proximal position in the venom gland. In Conus suturatus (Sutured cone), this protein is Delta-conotoxin SuVIA.